The sequence spans 306 residues: D-alanine--D-alanine ligase B (306 aa).

The ATP-grasp domain occupies 101–303; that stretch reads KLLWQGAGLP…FSQLVVRILE (203 aa). Position 134–189 (134–189) interacts with ATP; that stretch reads ISALGLPLIVKPSREGSSVGMTKVVEENALQGALSLAFQHDDEILIEKWLCGPEFT. Mg(2+) is bound by residues Asp-257, Glu-270, and Asn-272.

This sequence belongs to the D-alanine--D-alanine ligase family. In terms of assembly, monomer. Mg(2+) serves as cofactor. Mn(2+) is required as a cofactor.

Its subcellular location is the cytoplasm. The catalysed reaction is 2 D-alanine + ATP = D-alanyl-D-alanine + ADP + phosphate + H(+). It functions in the pathway cell wall biogenesis; peptidoglycan biosynthesis. Cell wall formation. The sequence is that of D-alanine--D-alanine ligase B (ddlB) from Salmonella typhimurium (strain LT2 / SGSC1412 / ATCC 700720).